A 200-amino-acid polypeptide reads, in one-letter code: Sorting nexin-10 (200 aa).

The segment at 8 to 125 is required for interaction with ATP6V1D; that stretch reads EEFVSVWVRD…SLHLFLQSHL (118 aa). The PX domain occupies 10–127; the sequence is FVSVWVRDPR…HLFLQSHLNS (118 aa). 3 residues coordinate a 1,2-diacyl-sn-glycero-3-phospho-(1D-myo-inositol-3-phosphate): Arg53, Lys79, and Arg94. The span at 156–167 shows a compositional bias: basic and acidic residues; sequence FPEEEEGKKEND. The tract at residues 156-200 is disordered; that stretch reads FPEEEEGKKENDIDYDSESSSSGFGHSSDDSSSHGCKMSTAPQES.

The protein belongs to the sorting nexin family. Interacts with ATP6V1D; may play a role in ciliogenesis.

The protein localises to the cytoplasm. It is found in the endosome membrane. Its subcellular location is the cytoskeleton. It localises to the microtubule organizing center. The protein resides in the centrosome. Probable phosphoinositide-binding protein involved in protein sorting and membrane trafficking in endosomes. Plays a role in cilium biogenesis through regulation of the transport and the localization of proteins to the cilium. Required for the localization to the cilium of V-ATPase subunit ATP6V1D and ATP6V0D1, and RAB8A. Involved in osteoclast differentiation and therefore bone resorption. In Bos taurus (Bovine), this protein is Sorting nexin-10 (SNX10).